We begin with the raw amino-acid sequence, 316 residues long: Leucine-rich repeat-containing protein 73 (316 aa).

LRR repeat units lie at residues 57–78 (SLAQ…KQLA), 86–106 (SIQS…ALLN), 114–137 (ALVA…CGLL), 145–166 (GLKE…SRLA), 174–187 (QVRV…PLGD), 202–223 (TLEV…TLLD), and 231–250 (ALRS…QQQI). Residues 257 to 296 (GEEEEEMAGGAADTQEWGRGREPAAHQRGGSSWKCPSDPN) are disordered. The span at 272 to 281 (EWGRGREPAA) shows a compositional bias: basic and acidic residues.

The sequence is that of Leucine-rich repeat-containing protein 73 (Lrrc73) from Rattus norvegicus (Rat).